The sequence spans 494 residues: Splicing regulatory glutamine/lysine-rich protein 1 (494 aa).

Residues 69–145 (RTVYVGNLNS…RPLKINHSNN (77 aa)) enclose the RRM domain. Phosphoserine is present on residues Ser-174 and Ser-187. The segment at 176–494 (ISAAIEPESG…ERLCSTADAV (319 aa)) is disordered. Residues 183–192 (ESGKSNERKG) show a composition bias toward basic and acidic residues. Composition is skewed to basic residues over residues 193-230 (GRSR…RSRS) and 238-262 (SKSP…RSRD). Residues 263 to 340 (KRKDTREKVK…DRSKEADEKR (78 aa)) show a composition bias toward basic and acidic residues. Thr-348 is modified (phosphothreonine). Positions 357-373 (RRSRSASRERRRRRSRS) are enriched in basic residues. 2 stretches are compositionally biased toward basic and acidic residues: residues 404-453 (REKE…KEAD) and 463-474 (KDTARTEEESKA).

The protein belongs to the splicing factor SR family. As to quaternary structure, interacts with SREK1IP1. Homodimer. Binds SFRS1, SFRS2, SFRS3 and SFRS6. Interacts with the spliceosome. In terms of tissue distribution, ubiquitous. Detected in liver, brain, lung, spleen, testis and pancreas.

The protein resides in the nucleus. In terms of biological role, participates in the regulation of alternative splicing by modulating the activity of other splice facors. Inhibits the splicing activity of SFRS1, SFRS2 and SFRS6. Augments the splicing activity of SFRS3. In Rattus norvegicus (Rat), this protein is Splicing regulatory glutamine/lysine-rich protein 1 (Srek1).